The following is a 710-amino-acid chain: Choline transporter-like protein 2 (710 aa).

Topologically, residues 1 to 34 (MEDDGKSPPDSAYGEPKKYDPNFKGPIQNRGCTD) are cytoplasmic. The chain crosses the membrane as a helical span at residues 35-55 (ILCCILIVLGIIAYVAVGIVA). The Extracellular portion of the chain corresponds to 56 to 236 (WTYGDPRKVI…KIFEDYTVSW (181 aa)). 3 N-linked (GlcNAc...) asparagine glycosylation sites follow: Asn147, Asn190, and Asn204. Residues 237–257 (YWIIIGLIIAMVISLIFVVLL) traverse the membrane as a helical segment. Topologically, residues 258–260 (RFL) are cytoplasmic. The helical transmembrane segment at 261–281 (AGIMVWVMIVLVIAVMGYGIF) threads the bilayer. The Extracellular segment spans residues 282 to 319 (HCYMEYARLKGQSGSDVTLKDIGFQTDIRVYLHLRQTW). A helical transmembrane segment spans residues 320–340 (LAFMIILCILEVIVILLLIFL). Residues 341–368 (RKRIMIAIALIKEASRAVGFVMSSLVFP) lie on the Cytoplasmic side of the membrane. A helical membrane pass occupies residues 369 to 389 (LFTFLLVCLCIAYWAITAVFL). The Extracellular segment spans residues 390–458 (STSNEAVYKV…FQIYNAFMFL (69 aa)). N-linked (GlcNAc...) asparagine glycans are attached at residues Asn401, Asn418, and Asn421. A helical membrane pass occupies residues 459-481 (WLANFVIALGQVTLAGAFASYYW). Over 482 to 508 (AFKKPDDMPAFPIFSSLGRALRYHTGS) the chain is Cytoplasmic. A helical membrane pass occupies residues 509–529 (LAFGSLILAIVQMIRILLEYL). The Extracellular segment spans residues 530-567 (DHKLKGADNKCARFLLCCLKCCFWCLEKFIKFLNRNAY). Residues 568–588 (IMIAIYGTNFCTSARNAFFLL) traverse the membrane as a helical segment. Residues 589 to 603 (MRNIIRVAVLDKVTD) lie on the Cytoplasmic side of the membrane. A helical transmembrane segment spans residues 604–624 (FLLFLGKLLVVGCVGILAFFF). Residues 625–642 (FSRRIQIVQDTAPTLNYY) are Extracellular-facing. A helical transmembrane segment spans residues 643-663 (WVPILTVILGSYLIAHGFFSV). Topologically, residues 664–710 (YGMCVDTLFLCFLEDLERNDGSTERPYFMSGSLQKLLNKSNQTKPDK) are cytoplasmic.

This sequence belongs to the CTL (choline transporter-like) family.

The protein localises to the cell membrane. It is found in the mitochondrion outer membrane. The enzyme catalyses choline(out) + n H(+)(in) = choline(in) + n H(+)(out). It carries out the reaction ethanolamine(out) + n H(+)(in) = ethanolamine(in) + n H(+)(out). In terms of biological role, choline/H+ antiporter, mainly in mitochodria. Also acts as a low-affinity ethanolamine/H+ antiporter, regulating the supply of extracellular ethanolamine (Etn) for the CDP-Etn pathway, redistribute intracellular Etn and balance the CDP-Cho and CDP-Etn arms of the Kennedy pathway. This Xenopus laevis (African clawed frog) protein is Choline transporter-like protein 2 (slc44a2).